The following is a 145-amino-acid chain: Photosystem I reaction center subunit VI-2, chloroplastic (145 aa).

Residues 1 to 50 (MASFATIAAVQPSAAVKGLGGSSLAGAKLFIKPSRQSFKTKSTRAGAVVA) constitute a chloroplast transit peptide. The chain crosses the membrane as a helical span at residues 102–118 (LLLKFLILGGGSLLTYV). The tract at residues 126-145 (VLPIKRGPQEPPKLGPRGKL) is disordered.

Belongs to the psaH family.

It is found in the plastid. The protein localises to the chloroplast thylakoid membrane. Functionally, possible role could be the docking of the LHC I antenna complex to the core complex. This is Photosystem I reaction center subunit VI-2, chloroplastic (PSAH2) from Arabidopsis thaliana (Mouse-ear cress).